A 449-amino-acid polypeptide reads, in one-letter code: Hyaluronidase-3 (449 aa).

The first 23 residues, Met-1 to Val-23, serve as a signal peptide directing secretion. Intrachain disulfides connect Cys-47–Cys-340 and Cys-211–Cys-227. Asn-67, Asn-103, and Asn-111 each carry an N-linked (GlcNAc...) asparagine glycan. The active-site Proton donor is the Glu-135. Asn-153 is a glycosylation site (N-linked (GlcNAc...) asparagine). N-linked (GlcNAc...) asparagine glycosylation is present at Asn-357. Intrachain disulfides connect Cys-365–Cys-376, Cys-370–Cys-427, and Cys-429–Cys-438. Asn-401 carries an N-linked (GlcNAc...) asparagine glycan. Residues Cys-427–Cys-438 form the EGF-like domain.

Belongs to the glycosyl hydrolase 56 family. Monomer. As to expression, expressed by the venom gland.

The protein localises to the secreted. The enzyme catalyses Random hydrolysis of (1-&gt;4)-linkages between N-acetyl-beta-D-glucosamine and D-glucuronate residues in hyaluronate.. Its function is as follows. Snake venom endo-hyaluronidase that degrades hyaluronan to smaller oligosaccharide fragments. In venom, it is not toxic by itself, but increases the diffusion of other venom proteins by degrading the extracellular matrix. In addition, it displays antiedematogenic activity. This is Hyaluronidase-3 from Cerastes cerastes (Horned desert viper).